Consider the following 263-residue polypeptide: Hydroxyethylthiazole kinase 1 (263 aa).

Methionine 42 contributes to the substrate binding site. Lysine 118 and threonine 164 together coordinate ATP. Glycine 191 is a binding site for substrate.

It belongs to the Thz kinase family. Mg(2+) is required as a cofactor.

The catalysed reaction is 5-(2-hydroxyethyl)-4-methylthiazole + ATP = 4-methyl-5-(2-phosphooxyethyl)-thiazole + ADP + H(+). It functions in the pathway cofactor biosynthesis; thiamine diphosphate biosynthesis; 4-methyl-5-(2-phosphoethyl)-thiazole from 5-(2-hydroxyethyl)-4-methylthiazole: step 1/1. Its function is as follows. Catalyzes the phosphorylation of the hydroxyl group of 4-methyl-5-beta-hydroxyethylthiazole (THZ). In Clostridium botulinum (strain Kyoto / Type A2), this protein is Hydroxyethylthiazole kinase 1.